Consider the following 122-residue polypeptide: Phosphoribosyl-ATP pyrophosphatase (122 aa).

This sequence belongs to the PRA-PH family.

It localises to the cytoplasm. It carries out the reaction 1-(5-phospho-beta-D-ribosyl)-ATP + H2O = 1-(5-phospho-beta-D-ribosyl)-5'-AMP + diphosphate + H(+). It participates in amino-acid biosynthesis; L-histidine biosynthesis; L-histidine from 5-phospho-alpha-D-ribose 1-diphosphate: step 2/9. The polypeptide is Phosphoribosyl-ATP pyrophosphatase (Cupriavidus metallidurans (strain ATCC 43123 / DSM 2839 / NBRC 102507 / CH34) (Ralstonia metallidurans)).